Reading from the N-terminus, the 344-residue chain is Transcription factor JunB (344 aa).

Residues Lys-4, Lys-33, and Lys-36 each participate in a glycyl lysine isopeptide (Lys-Gly) (interchain with G-Cter in SUMO2) cross-link. Residues 51-65 show a composition bias toward gly residues; it reads KGPGARGPGPEGSGA. Positions 51 to 75 are disordered; sequence KGPGARGPGPEGSGAGSYFSGQGSD. Lys-81 is covalently cross-linked (Glycyl lysine isopeptide (Lys-Gly) (interchain with G-Cter in SUMO2)). Thr-102 and Thr-104 each carry phosphothreonine. Residue Ser-117 is modified to Phosphoserine. Residue Lys-138 forms a Glycyl lysine isopeptide (Lys-Gly) (interchain with G-Cter in SUMO2) linkage. 2 disordered regions span residues 181-202 and 237-257; these read NLSS…VGTG and KEEP…PVSP. Residues 183–192 show a composition bias toward low complexity; the sequence is SSYSPASAPS. An N6-acetyllysine; alternate modification is found at Lys-237. Lys-237 participates in a covalent cross-link: Glycyl lysine isopeptide (Lys-Gly) (interchain with G-Cter in SUMO1); alternate. A Glycyl lysine isopeptide (Lys-Gly) (interchain with G-Cter in SUMO2); alternate cross-link involves residue Lys-237. A compositionally biased stretch (basic and acidic residues) spans 237–250; the sequence is KEEPQTVPEARSRD. Position 248 is a phosphoserine (Ser-248). Thr-252 carries the post-translational modification Phosphothreonine. Residue Ser-256 is modified to Phosphoserine. Residues 265–292 form a basic motif region; sequence RIKVERKRLRNRLAATKCRKRKLERIAR. Positions 265 to 328 constitute a bZIP domain; it reads RIKVERKRLR…AQLKQKVMTH (64 aa). A leucine-zipper region spans residues 293–321; that stretch reads LEDKVKTLKAENAGLSSAAGLLREQVAQL. Residue Lys-340 forms a Glycyl lysine isopeptide (Lys-Gly) (interchain with G-Cter in SUMO2) linkage.

It belongs to the bZIP family. Jun subfamily. In terms of assembly, binds DNA as a homodimer or as a heterodimer with another member of the Jun/Fos family. Component of an AP-1 transcription factor complex composed of JUN-FOS heterodimers. As part of the AP-1 transcription factor complex, forms heterodimers with FOSB, thereby binding to the AP-1 consensus sequence and stimulating transcription. Interacts with NFE2 (via its WW domains). Ubiquitinated by ITCH, leading to its degradation.

Its subcellular location is the nucleus. Functionally, transcription factor involved in regulating gene activity following the primary growth factor response. Binds to the DNA sequence 5'-TGA[GC]TCA-3'. Heterodimerizes with proteins of the FOS family to form an AP-1 transcription complex, thereby enhancing its DNA binding activity to an AP-1 consensus sequence 5'-TGA[GC]TCA-3' and enhancing its transcriptional activity. The protein is Transcription factor JunB (Junb) of Mus musculus (Mouse).